The chain runs to 638 residues: MEALRIYLWSLCLSLCLIIYGANSDPLEDKRALLEFLTIMQPTRSLNWNETSQVCNIWTGVTCNQDGSRIIAVRLPGVGLNGQIPPNTISRLSALRVLSLRSNLISGEFPKDFVELKDLAFLYLQDNNLSGPLPLDFSVWKNLTSVNLSNNGFNGTIPSSLSRLKRIQSLNLANNTLSGDIPDLSVLSSLQHIDLSNNYDLAGPIPDWLRRFPFSSYTGIDIIPPGGNYTLVTPPPPSEQTHQKPSKARFLGLSETVFLLIVIAVSIVVITALAFVLTVCYVRRKLRRGDGVISDNKLQKKGGMSPEKFVSRMEDVNNRLSFFEGCNYSFDLEDLLRASAEVLGKGTFGTTYKAVLEDATSVAVKRLKDVAAGKRDFEQQMEIIGGIKHENVVELKAYYYSKDEKLMVYDYFSRGSVASLLHGNRGENRIPLDWETRMKIAIGAAKGIARIHKENNGKLVHGNIKSSNIFLNSESNGCVSDLGLTAVMSPLAPPISRQAGYRAPEVTDTRKSSQLSDVYSFGVVLLELLTGKSPIHTTAGDEIIHLVRWVHSVVREEWTAEVFDIELLRYTNIEEEMVEMLQIAMSCVVKAADQRPKMSDLVRLIENVGNRRTSIEPEPELKPKSENGASETSTPSEI.

Residues 1-24 (MEALRIYLWSLCLSLCLIIYGANS) form the signal peptide. LRR repeat units lie at residues 94–117 (ALRV…VELK), 118–139 (DLAF…DFSV), 142–165 (NLTS…SRLK), 166–188 (RIQS…SVLS), and 189–198 (SLQHIDLSNN). The chain crosses the membrane as a helical span at residues 257-277 (VFLLIVIAVSIVVITALAFVL). The region spanning 337 to 608 (RASAEVLGKG…SDLVRLIENV (272 aa)) is the Protein kinase domain. Phosphoserine is present on Ser-339. 343–351 (LGKGTFGTT) lines the ATP pocket. Phosphothreonine is present on Thr-360. Lys-365 lines the ATP pocket. A phosphoserine mark is found at Ser-416 and Ser-419. A phosphothreonine mark is found at Thr-436 and Thr-509. Phosphoserine is present on Ser-513. The disordered stretch occupies residues 612 to 638 (RTSIEPEPELKPKSENGASETSTPSEI). The segment covering 613–625 (TSIEPEPELKPKS) has biased composition (basic and acidic residues). Over residues 627 to 638 (NGASETSTPSEI) the composition is skewed to polar residues.

This sequence belongs to the protein kinase superfamily.

It is found in the membrane. This is Probable inactive receptor kinase At4g23740 from Arabidopsis thaliana (Mouse-ear cress).